We begin with the raw amino-acid sequence, 123 residues long: Small ribosomal subunit protein uS12cz/uS12cy (123 aa).

This sequence belongs to the universal ribosomal protein uS12 family. As to quaternary structure, part of the 30S ribosomal subunit.

The protein localises to the plastid. Its subcellular location is the chloroplast. With S4 and S5 plays an important role in translational accuracy. Located at the interface of the 30S and 50S subunits. In Citrus sinensis (Sweet orange), this protein is Small ribosomal subunit protein uS12cz/uS12cy (rps12-A).